The primary structure comprises 916 residues: Chitin synthase B (916 aa).

Disordered regions lie at residues 1–84 (MAYQ…AGFH) and 114–141 (SPYA…GGGL). An N-linked (GlcNAc...) asparagine glycan is attached at asparagine 18. The span at 60–75 (RGTSPVRPTSGYSLTE) shows a compositional bias: polar residues. Asparagine 546 is a glycosylation site (N-linked (GlcNAc...) asparagine). Helical transmembrane passes span 572 to 594 (MFFL…FSLA), 628 to 648 (IINT…FILA), 663 to 683 (SFVV…YLVV), 715 to 735 (IIII…FMYL), 743 to 763 (SFPA…VYAF), 845 to 865 (LVTL…SDGM), and 884 to 904 (ALLW…CWFL).

Belongs to the chitin synthase family. Class III subfamily.

The protein resides in the cell membrane. It carries out the reaction [(1-&gt;4)-N-acetyl-beta-D-glucosaminyl](n) + UDP-N-acetyl-alpha-D-glucosamine = [(1-&gt;4)-N-acetyl-beta-D-glucosaminyl](n+1) + UDP + H(+). In terms of biological role, polymerizes chitin, a structural polymer of the cell wall and septum, by transferring the sugar moiety of UDP-GlcNAc to the non-reducing end of the growing chitin polymer. Involved in hyphal growth and more particularly in branching. In Aspergillus oryzae (strain ATCC 42149 / RIB 40) (Yellow koji mold), this protein is Chitin synthase B.